We begin with the raw amino-acid sequence, 246 residues long: Isoprenyl transferase 1 (246 aa).

Asp-19 is a catalytic residue. Asp-19 contributes to the Mg(2+) binding site. Substrate is bound by residues 20–23 (GNGR), Trp-24, Arg-32, His-36, and 64–66 (STD). The Proton acceptor role is filled by Asn-67. Substrate is bound by residues Trp-68, Arg-70, Arg-180, and 186–188 (RLS). Glu-199 lines the Mg(2+) pocket.

The protein belongs to the UPP synthase family. As to quaternary structure, homodimer. Requires Mg(2+) as cofactor.

In terms of biological role, catalyzes the condensation of isopentenyl diphosphate (IPP) with allylic pyrophosphates generating different type of terpenoids. The protein is Isoprenyl transferase 1 of Bradyrhizobium diazoefficiens (strain JCM 10833 / BCRC 13528 / IAM 13628 / NBRC 14792 / USDA 110).